We begin with the raw amino-acid sequence, 979 residues long: Calsyntenin-1 (979 aa).

Residues 1–28 form the signal peptide; that stretch reads MLRRPAPALAPAVRLLLAGLLCGGGVWA. At 29-859 the chain is on the extracellular side; it reads ARVNKHKPWL…PHPFAVVPST (831 aa). Cadherin domains lie at 38-164 and 165-265; these read LEPT…APVF and KEKS…SPGW. N-linked (GlcNAc...) asparagine glycans are attached at residues Asn-346, Asn-366, and Asn-515. The helical transmembrane segment at 860 to 880 threads the bilayer; the sequence is ATVVIVVCVSFLVFMIILGVF. Residues 881–979 are Cytoplasmic-facing; the sequence is RIRAAHQRTM…LEWDDSTLSY (99 aa). The disordered stretch occupies residues 915–979; it reads METYEDQHSS…LEWDDSTLSY (65 aa). Over residues 925–959 the composition is skewed to acidic residues; it reads EEEEEEEEEEESEDGEEEEDITSAESESSEEEEGG.

The protein belongs to the calsyntenin family. In terms of assembly, directly interacts with APBA2. Forms a tripartite complex with APBA2 and APP. The CTF1 chain interacts with PSEN1. Interacts with KLC1 and APBB1. Interacts with APBB1; this interaction stabilizes AlcICD metabolism. As to quaternary structure, interacts with PSEN1. In terms of processing, proteolytically processed under normal cellular conditions. A primary zeta-cleavage generates a large extracellular (soluble) N-terminal domain (sAlc) and a short C-terminal transmembrane fragment (CTF1). A secondary cleavage catalyzed by presenilin gamma-secretase within the transmembrane domain releases the beta-Alc-alpha chain in the extracellular milieu and produces an intracellular fragment (AlcICD). Beta-Alc-alpha secretion is largely dependent upon PSEN1 and PSEN2. This processing is strongly suppressed in the tripartite complex formed with APBA2 and APP, which seems to prevent the association with PSEN1. As to expression, highly expressed in the brain (at protein level), with over 90% of the neurons expressing detectable amounts. In the brain, relatively high levels in the cerebral cortex, striatum, hippocampus and thalamus. Moderate levels in the cerebellum. Low levels in the olfactory bulb, midbrain and pons (at protein level). Not detected in Purkinje cells. Expressed at low levels in the lung (at protein level). At the mRNA level, weakly detected in the kidney, lung, skeletal muscle, heart and testis. Not expressed in the sciatic nerve fiber.

The protein localises to the postsynaptic cell membrane. It is found in the endoplasmic reticulum membrane. The protein resides in the golgi apparatus membrane. It localises to the cell projection. Its subcellular location is the neuron projection. The protein localises to the vesicle. It is found in the nucleus. Functionally, postsynaptic adhesion molecule that binds to presynaptic neurexins to mediate both excitatory and inhibitory synapse formation. Promotes synapse development by acting as a cell adhesion molecule at the postsynaptic membrane, which associates with neurexin-alpha at the presynaptic membrane. Also functions as a cargo in axonal anterograde transport by acting as a molecular adapter that promotes KLC1 association with vesicles. Complex formation with APBA2 and APP, stabilizes APP metabolism and enhances APBA2-mediated suppression of beta-APP40 secretion, due to the retardation of intracellular APP maturation. Its function is as follows. As intracellular fragment AlcICD, suppresses APBB1-dependent transactivation stimulated by APP C-terminal intracellular fragment (AICD), most probably by competing with AICD for APBB1-binding. In terms of biological role, in complex with APBA2 and C99, a C-terminal APP fragment, abolishes C99 interaction with PSEN1 and thus APP C99 cleavage by gamma-secretase, most probably through stabilization of the direct interaction between APBA2 and APP. This is Calsyntenin-1 from Mus musculus (Mouse).